Consider the following 610-residue polypeptide: Threonine--tRNA ligase (610 aa).

Positions 1-29 are disordered; it reads MANHDQQTVSSAAATTSASPSPVVLPKTS. A compositionally biased stretch (low complexity) spans 8 to 24; the sequence is TVSSAAATTSASPSPVV. The interval 209 to 502 is catalytic; the sequence is DHRRIGKDLD…MTENYAGDYP (294 aa). Residues Cys302, His353, and His479 each coordinate Zn(2+).

It belongs to the class-II aminoacyl-tRNA synthetase family. In terms of assembly, homodimer. It depends on Zn(2+) as a cofactor.

It is found in the cytoplasm. It catalyses the reaction tRNA(Thr) + L-threonine + ATP = L-threonyl-tRNA(Thr) + AMP + diphosphate + H(+). Functionally, catalyzes the attachment of threonine to tRNA(Thr) in a two-step reaction: L-threonine is first activated by ATP to form Thr-AMP and then transferred to the acceptor end of tRNA(Thr). Also edits incorrectly charged L-seryl-tRNA(Thr). The chain is Threonine--tRNA ligase from Synechococcus sp. (strain WH7803).